Consider the following 194-residue polypeptide: Xanthine phosphoribosyltransferase (194 aa).

Residues leucine 20 and asparagine 27 each coordinate xanthine. Position 128–132 (128–132 (ANGQA)) interacts with 5-phospho-alpha-D-ribose 1-diphosphate. Lysine 156 serves as a coordination point for xanthine.

Belongs to the purine/pyrimidine phosphoribosyltransferase family. Xpt subfamily. In terms of assembly, homodimer.

The protein localises to the cytoplasm. It carries out the reaction XMP + diphosphate = xanthine + 5-phospho-alpha-D-ribose 1-diphosphate. The protein operates within purine metabolism; XMP biosynthesis via salvage pathway; XMP from xanthine: step 1/1. Its function is as follows. Converts the preformed base xanthine, a product of nucleic acid breakdown, to xanthosine 5'-monophosphate (XMP), so it can be reused for RNA or DNA synthesis. The protein is Xanthine phosphoribosyltransferase of Oceanobacillus iheyensis (strain DSM 14371 / CIP 107618 / JCM 11309 / KCTC 3954 / HTE831).